The following is a 94-amino-acid chain: Integration host factor subunit beta (94 aa).

This sequence belongs to the bacterial histone-like protein family. As to quaternary structure, heterodimer of an alpha and a beta chain.

In terms of biological role, this protein is one of the two subunits of integration host factor, a specific DNA-binding protein that functions in genetic recombination as well as in transcriptional and translational control. This Azoarcus sp. (strain BH72) protein is Integration host factor subunit beta.